A 295-amino-acid polypeptide reads, in one-letter code: Virginiamycin B lyase (295 aa).

A substrate-binding site is contributed by histidine 228. A Mg(2+)-binding site is contributed by glutamate 268. Histidine 270 functions as the Proton acceptor in the catalytic mechanism. Glutamate 285 is a binding site for Mg(2+).

Belongs to the Vgb family. Monomer. Mg(2+) serves as cofactor.

In terms of biological role, inactivates the type B streptogramin antibiotics by linearizing the lactone ring at the ester linkage, generating a free phenylglycine carboxylate and converting the threonyl moiety into 2-amino-butenoic acid. The polypeptide is Virginiamycin B lyase (Clostridium beijerinckii (strain ATCC 51743 / NCIMB 8052) (Clostridium acetobutylicum)).